The sequence spans 351 residues: Probable protein phosphatase 2C 8 (351 aa).

Positions 1-63 are disordered; that stretch reads MLEKESDLTA…REAEEDKPSF (63 aa). A compositionally biased stretch (basic and acidic residues) spans 54–63; that stretch reads REAEEDKPSF. A PPM-type phosphatase domain is found at 74–348; that stretch reads EADVAEDKGA…DNCTAIVIVF (275 aa). The Mn(2+) site is built by Asp114, Gly115, Asp295, and Asp339.

The protein belongs to the PP2C family. The cofactor is Mg(2+). Mn(2+) serves as cofactor.

The enzyme catalyses O-phospho-L-seryl-[protein] + H2O = L-seryl-[protein] + phosphate. It catalyses the reaction O-phospho-L-threonyl-[protein] + H2O = L-threonyl-[protein] + phosphate. The sequence is that of Probable protein phosphatase 2C 8 from Arabidopsis thaliana (Mouse-ear cress).